The following is a 453-amino-acid chain: Homogentisate 1,2-dioxygenase (453 aa).

The active-site Proton acceptor is the H306. Residues H349 and E355 each contribute to the Fe cation site. Residues Y364 and H385 each coordinate homogentisate. Residue H385 coordinates Fe cation.

This sequence belongs to the homogentisate dioxygenase family. In terms of assembly, hexamer; dimer of trimers. Requires Fe cation as cofactor.

The catalysed reaction is homogentisate + O2 = 4-maleylacetoacetate + H(+). It participates in amino-acid degradation; L-phenylalanine degradation; acetoacetate and fumarate from L-phenylalanine: step 4/6. Involved in the catabolism of homogentisate (2,5-dihydroxyphenylacetate or 2,5-OH-PhAc), a central intermediate in the degradation of phenylalanine and tyrosine. Catalyzes the oxidative ring cleavage of the aromatic ring of homogentisate to yield maleylacetoacetate. This Rhizobium rhizogenes (strain K84 / ATCC BAA-868) (Agrobacterium radiobacter) protein is Homogentisate 1,2-dioxygenase.